A 295-amino-acid polypeptide reads, in one-letter code: Probable endonuclease lcl3 (295 aa).

Residues 1-35 form a disordered region; it reads MRWPPWASDSQAQQQTAKHDEHDERQAAAKSTTTS. Positions 17-27 are enriched in basic and acidic residues; the sequence is AKHDEHDERQA. Residues 52 to 74 traverse the membrane as a helical segment; sequence FTEARTIIPTLILTSGFLGAFYI. The region spanning 96–263 is the TNase-like domain; the sequence is RSLLGQVTSV…KLRGVGLWKD (168 aa). Residue Arg147 is part of the active site. Asp152 is a Ca(2+) binding site. Catalysis depends on residues Glu155 and Arg195.

It belongs to the LCL3 family.

Its subcellular location is the mitochondrion. The protein localises to the membrane. The sequence is that of Probable endonuclease lcl3 (lcl3) from Neosartorya fischeri (strain ATCC 1020 / DSM 3700 / CBS 544.65 / FGSC A1164 / JCM 1740 / NRRL 181 / WB 181) (Aspergillus fischerianus).